Reading from the N-terminus, the 639-residue chain is DNA primase (639 aa).

A CHC2-type zinc finger spans residues 41–65; it reads CPFHNEKSPSFHVRPNHGHFHCFGC. The Toprim domain occupies 262–348; sequence HQAVVVEGYT…AGQSFVAVAP (87 aa). 3 residues coordinate Mg(2+): Glu-268, Asp-319, and Asp-321. Residues 460 to 479 form a disordered region; sequence RAAQRPTAGPPTELAVRPDP.

It belongs to the DnaG primase family. In terms of assembly, monomer. Interacts with DnaB. Requires Zn(2+) as cofactor. Mg(2+) is required as a cofactor.

It carries out the reaction ssDNA + n NTP = ssDNA/pppN(pN)n-1 hybrid + (n-1) diphosphate.. In terms of biological role, RNA polymerase that catalyzes the synthesis of short RNA molecules used as primers for DNA polymerase during DNA replication. This Mycobacterium bovis (strain ATCC BAA-935 / AF2122/97) protein is DNA primase.